The chain runs to 70 residues: Large ribosomal subunit protein eL38 (70 aa).

Belongs to the eukaryotic ribosomal protein eL38 family.

The protein is Large ribosomal subunit protein eL38 (rpl-38) of Caenorhabditis elegans.